The sequence spans 430 residues: Dihydrolipoyllysine-residue acetyltransferase component of pyruvate dehydrogenase complex (430 aa).

A Lipoyl-binding domain is found at 2–77; it reads AFEFRLPDIG…VVGDVIVKID (76 aa). N6-lipoyllysine is present on Lys-43. Residues 80 to 122 form a disordered region; that stretch reads DAEDMQFKGHDDDSSSKEEPAKEEAPAEQAPVATQTEEVDENR. Over residues 84–104 the composition is skewed to basic and acidic residues; sequence MQFKGHDDDSSSKEEPAKEEA. The region spanning 125–162 is the Peripheral subunit-binding (PSBD) domain; it reads KAMPSVRKYAREKGVNIKAVSGSGKNGRITKEDVDAYL. Residues 164-200 form a disordered region; the sequence is GGAPTASNESADSATNEEVAETPAAPAAVSLEGDFPE. Over residues 177-192 the composition is skewed to low complexity; it reads ATNEEVAETPAAPAAV. His-401 is a catalytic residue.

Belongs to the 2-oxoacid dehydrogenase family. As to quaternary structure, forms a 24-polypeptide structural core with octahedral symmetry. (R)-lipoate serves as cofactor.

The catalysed reaction is N(6)-[(R)-dihydrolipoyl]-L-lysyl-[protein] + acetyl-CoA = N(6)-[(R)-S(8)-acetyldihydrolipoyl]-L-lysyl-[protein] + CoA. Its function is as follows. The pyruvate dehydrogenase complex catalyzes the overall conversion of pyruvate to acetyl-CoA and CO(2). It contains multiple copies of three enzymatic components: pyruvate dehydrogenase (E1), dihydrolipoamide acetyltransferase (E2) and lipoamide dehydrogenase (E3). The chain is Dihydrolipoyllysine-residue acetyltransferase component of pyruvate dehydrogenase complex (pdhC) from Staphylococcus aureus.